A 199-amino-acid chain; its full sequence is Glycerol-3-phosphate acyltransferase (199 aa).

5 consecutive transmembrane segments (helical) span residues Phe-4–Ile-24, Leu-56–Leu-76, Gln-80–Phe-100, Ile-115–Leu-135, and Tyr-154–Arg-176.

This sequence belongs to the PlsY family. In terms of assembly, probably interacts with PlsX.

The protein resides in the cell inner membrane. It catalyses the reaction an acyl phosphate + sn-glycerol 3-phosphate = a 1-acyl-sn-glycero-3-phosphate + phosphate. It functions in the pathway lipid metabolism; phospholipid metabolism. Functionally, catalyzes the transfer of an acyl group from acyl-phosphate (acyl-PO(4)) to glycerol-3-phosphate (G3P) to form lysophosphatidic acid (LPA). This enzyme utilizes acyl-phosphate as fatty acyl donor, but not acyl-CoA or acyl-ACP. The protein is Glycerol-3-phosphate acyltransferase of Haemophilus influenzae (strain PittGG).